The following is a 67-amino-acid chain: Sec-independent protein translocase protein TatA (67 aa).

A helical membrane pass occupies residues 1–21 (MGSFSLTHWIIVLIIVVLIFG). The disordered stretch occupies residues 43–67 (LNEGTDGKEAQKDDVIEHKKDEDKA). Positions 47–67 (TDGKEAQKDDVIEHKKDEDKA) are enriched in basic and acidic residues.

This sequence belongs to the TatA/E family. The Tat system comprises two distinct complexes: a TatABC complex, containing multiple copies of TatA, TatB and TatC subunits, and a separate TatA complex, containing only TatA subunits. Substrates initially bind to the TatABC complex, which probably triggers association of the separate TatA complex to form the active translocon.

Its subcellular location is the cell inner membrane. Functionally, part of the twin-arginine translocation (Tat) system that transports large folded proteins containing a characteristic twin-arginine motif in their signal peptide across membranes. TatA could form the protein-conducting channel of the Tat system. The protein is Sec-independent protein translocase protein TatA of Neisseria gonorrhoeae (strain ATCC 700825 / FA 1090).